We begin with the raw amino-acid sequence, 454 residues long: MWLEILLASVLGFVIYWFVSKDKEETLLLGDGWWGPGSRPAAAEDESIRPFKVETSDEEINDLHQRIEKFRLTPPLEDSRFHYGFNSNYLKKIISYWRNTFDWRKQVEVLNKYPHFKTKIEGLDIHFIHVKPPQLPSGRTAKPLLMVHGWPGCFYEFYKIIPLLTDPKNHGLSDEHVFEVICPSIPGYGFSEASSKKGFNSVAAARIFYKLMLRLGFQEFYLQGGDWGSLICTNMAQLVPSHVKGLHLNVALVLRNVYTLTFFLGRRLGRLFGYTERDLELLYPFKKTFYTLMRESGYMHIQSTKPDTVGCALNDSPVGLAAYILEKFSTWTNEEFRDLEDGGLERKFSLDELLTVIMLYWTTGTITSSQRFYKENLGQGVMANKHEAIKVHVPTGFAAFPSEVLHCPEKWVKNKYPKLISYSYMARGGHFAAFEEPELLAQDIRKFMGLLEQQ.

A helical transmembrane segment spans residues 1–21 (MWLEILLASVLGFVIYWFVSK). Residues 22–454 (DKEETLLLGD…RKFMGLLEQQ (433 aa)) lie on the Cytoplasmic side of the membrane. The active-site Nucleophile is D226. R294 carries the dimethylated arginine modification. Y373 functions as the Proton donor in the catalytic mechanism. H430 serves as the catalytic Proton acceptor.

This sequence belongs to the peptidase S33 family.

The protein localises to the microsome membrane. Its subcellular location is the endoplasmic reticulum membrane. The catalysed reaction is cis-stilbene oxide + H2O = (1R,2R)-hydrobenzoin. The enzyme catalyses 1-(4-methoxyphenyl)-N-methyl-N-[(3-methyloxetan-3-yl)methyl]methanamine + H2O = 2-{[(4-methoxybenzyl)(methyl)amino]methyl}-2-methylpropane-1,3-diol. It carries out the reaction 8,9-epoxy-(5Z,11Z,14Z)-eicosatrienoate + H2O = 8,9-dihydroxy-(5Z,11Z,14Z)-eicosatrienoate. It catalyses the reaction 11,12-epoxy-(5Z,8Z,14Z)-eicosatrienoate + H2O = 11,12-dihydroxy-(5Z,8Z,14Z)-eicosatrienoate. The catalysed reaction is 2-(5Z,8Z,11Z,14Z-eicosatetraenoyl)-glycerol + H2O = glycerol + (5Z,8Z,11Z,14Z)-eicosatetraenoate + H(+). Its activity is regulated as follows. Inhibited by 10-hydroxystearamide and methoxy-arachidonyl fluorophosphate. Its function is as follows. Biotransformation enzyme that catalyzes the hydrolysis of arene and aliphatic epoxides to less reactive and more water soluble dihydrodiols by the trans addition of water. May play a role in the metabolism of endogenous lipids such as epoxide-containing fatty acids. Metabolizes the abundant endocannabinoid 2-arachidonoylglycerol (2-AG) to free arachidonic acid (AA) and glycerol. Binds 20(S)-hydroxycholesterol (20(S)-OHC). The protein is Epoxide hydrolase 1 (EPHX1) of Sus scrofa (Pig).